The chain runs to 392 residues: tRNA (guanine(26)-N(2)/guanine(27)-N(2))-dimethyltransferase (392 aa).

Residues 2 to 375 form the Trm1 methyltransferase domain; the sequence is EIVQEGIAKI…LSFEEVMKKM (374 aa). S-adenosyl-L-methionine-binding residues include arginine 36, arginine 66, aspartate 84, glutamate 113, and alanine 114. The Zn(2+) site is built by cysteine 247, cysteine 250, cysteine 266, and cysteine 269.

This sequence belongs to the class I-like SAM-binding methyltransferase superfamily. Trm1 family.

The catalysed reaction is guanosine(26)/guanosine(27) in tRNA + 4 S-adenosyl-L-methionine = N(2)-dimethylguanosine(26)/N(2)-dimethylguanosine(27) in tRNA + 4 S-adenosyl-L-homocysteine + 4 H(+). Its function is as follows. Dimethylates the guanine residues at position 26 and 27 of one or more tRNAs using S-adenosyl-L-methionine as donor of the methyl groups. The protein is tRNA (guanine(26)-N(2)/guanine(27)-N(2))-dimethyltransferase of Aquifex aeolicus (strain VF5).